Here is a 157-residue protein sequence, read N- to C-terminus: Ribosomal RNA large subunit methyltransferase H (157 aa).

S-adenosyl-L-methionine is bound by residues Gly-106 and 125 to 130 (LSEMTF).

It belongs to the RNA methyltransferase RlmH family. Homodimer.

The protein localises to the cytoplasm. It carries out the reaction pseudouridine(1915) in 23S rRNA + S-adenosyl-L-methionine = N(3)-methylpseudouridine(1915) in 23S rRNA + S-adenosyl-L-homocysteine + H(+). Its function is as follows. Specifically methylates the pseudouridine at position 1915 (m3Psi1915) in 23S rRNA. The polypeptide is Ribosomal RNA large subunit methyltransferase H (Syntrophobacter fumaroxidans (strain DSM 10017 / MPOB)).